Here is a 388-residue protein sequence, read N- to C-terminus: MKFDGVRPTRVEVYLDAITHNFREIKKIVGKNVKIMAVIKGDAYGHGASYVAKFLEKEGVDYFGVATTEEALELREKGIKTPILIFGYTPPTQLRQIVKHDLTQTVYDIKYAKELEKESLKQNKRAKVHIKIDTGLGRIGYIDFDLAQKEILEMANMRGLILEGIYSHFAAASEDDRDYCKEQFDKFMNLISSLEKKRLKIPLKHIANAAAILNLNYSHLDMVRPGIILFGAYPSKRVERKVELRETLRFTTRVVHLKDVPAGFFIGYGKSFVTKRKSVIATIPVGYADGLDRRLSNNYKLLLKGKYVPIVGRVCMDQCMIDVTDVEGVEIGDEVVIIGTQNNETVSVESMADKIETIPQEVFSRISRRVPRVYFYDGIKIGEVNYLK.

Catalysis depends on Lys-40, which acts as the Proton acceptor; specific for D-alanine. Position 40 is an N6-(pyridoxal phosphate)lysine (Lys-40). Residue Arg-138 coordinates substrate. Tyr-268 (proton acceptor; specific for L-alanine) is an active-site residue. Position 316 (Met-316) interacts with substrate.

This sequence belongs to the alanine racemase family. The cofactor is pyridoxal 5'-phosphate.

It carries out the reaction L-alanine = D-alanine. It functions in the pathway amino-acid biosynthesis; D-alanine biosynthesis; D-alanine from L-alanine: step 1/1. Functionally, catalyzes the interconversion of L-alanine and D-alanine. May also act on other amino acids. The chain is Alanine racemase 1 (alr1) from Caldanaerobacter subterraneus subsp. tengcongensis (strain DSM 15242 / JCM 11007 / NBRC 100824 / MB4) (Thermoanaerobacter tengcongensis).